The sequence spans 313 residues: Methionyl-tRNA formyltransferase (313 aa).

(6S)-5,6,7,8-tetrahydrofolate is bound at residue 112-115; it reads SLLP.

The protein belongs to the Fmt family.

The enzyme catalyses L-methionyl-tRNA(fMet) + (6R)-10-formyltetrahydrofolate = N-formyl-L-methionyl-tRNA(fMet) + (6S)-5,6,7,8-tetrahydrofolate + H(+). In terms of biological role, attaches a formyl group to the free amino group of methionyl-tRNA(fMet). The formyl group appears to play a dual role in the initiator identity of N-formylmethionyl-tRNA by promoting its recognition by IF2 and preventing the misappropriation of this tRNA by the elongation apparatus. This chain is Methionyl-tRNA formyltransferase, found in Roseiflexus castenholzii (strain DSM 13941 / HLO8).